Reading from the N-terminus, the 323-residue chain is ATP synthase gamma chain (323 aa).

The protein belongs to the ATPase gamma chain family. F-type ATPases have 2 components, CF(1) - the catalytic core - and CF(0) - the membrane proton channel. CF(1) has five subunits: alpha(3), beta(3), gamma(1), delta(1), epsilon(1). CF(0) has three main subunits: a, b and c.

The protein localises to the cell inner membrane. Functionally, produces ATP from ADP in the presence of a proton gradient across the membrane. The gamma chain is believed to be important in regulating ATPase activity and the flow of protons through the CF(0) complex. This is ATP synthase gamma chain from Rickettsia peacockii (strain Rustic).